The chain runs to 253 residues: Aminoglycoside nucleotidyltransferase (4') (253 aa).

Positions 1-127 are N-terminal domain; it reads MNGPIIMTRE…KVYQTAKSVE (127 aa). Residues serine 39, arginine 42, serine 49, aspartate 50, and glutamate 52 each contribute to the ATP site. The Mg(2+) site is built by aspartate 50 and glutamate 52. Neomycin B is bound by residues glutamate 52 and glutamate 67. Glutamate 67, lysine 74, glutamate 76, glutamate 141, and glutamate 145 together coordinate kanamycin A. The C-terminal domain stretch occupies residues 128-241; the sequence is AQTFHDAICA…NGIQEWTERH (114 aa). ATP-binding residues include glutamate 145, lysine 149, and threonine 187. Glutamate 145 contacts Mg(2+). Glutamate 145 functions as the Proton acceptor in the catalytic mechanism.

Homodimer. Mg(2+) serves as cofactor.

It catalyses the reaction amikacin + ATP = 4'-adenylylamikacin + diphosphate. It carries out the reaction kanamycin A + ATP = 4'-adenylylkanamycin A + diphosphate. The catalysed reaction is neomycin B + ATP = 4'-adenylylneomycin B + diphosphate. The enzyme catalyses paromomycin + ATP = 4'-adenylylparomomycin + diphosphate. It catalyses the reaction ribostamycin + ATP = 4'-adenylylribostamycin + diphosphate. It carries out the reaction tobramycin + ATP = 4'-adenylyltobramycin + diphosphate. The catalysed reaction is kanamycin A + CTP = 4'-cytidylylkanamycin A + diphosphate. The enzyme catalyses kanamycin A + GTP = 4'-guanylylkanamycin A + diphosphate. It catalyses the reaction kanamycin A + ITP = 4'-inosinylylkanamycin A + diphosphate. It carries out the reaction dTTP + kanamycin A = 4'-thymidylylkanamycin A + diphosphate. The catalysed reaction is kanamycin A + UTP = 4'-uridylylkanamycin A + diphosphate. The enzyme catalyses kanamycin A + dATP = 4'-(2'-deoxyadenylyl)kanamycin A + diphosphate. It catalyses the reaction kanamycin A + dCTP = 4'-(2'-deoxycytidylyl)kanamycin A + diphosphate. It carries out the reaction kanamycin A + dGTP = 4'-(2'-deoxyguanylyl)kanamycin A + diphosphate. The catalysed reaction is dUTP + kanamycin A = 4'-(2'-deoxyuridylyl)kanamycin A + diphosphate. The enzyme catalyses amikacin + GTP = 4'-guanylylamikacin + diphosphate. It catalyses the reaction amikacin + ITP = 4'-inosinylylamikacin + diphosphate. It carries out the reaction amikacin + CTP = 4'-cytidylylamikacin + diphosphate. The catalysed reaction is amikacin + UTP = 4'-uridylylamikacin + diphosphate. The enzyme catalyses amikacin + dTTP = 4'-thymidylylamikacin + diphosphate. In terms of biological role, inactivates aminoglycoside antibiotics such as kanamycin by catalyzing the transfer of a nucleotidyl group from a wide variety of nucleoside triphosphates ((d)ATP, (d)CTP, (d)GTP, ITP, TTP and (d)UTP) to the 4'-hydroxyl group of the aminoglycoside. In vitro, antibiotics without the 4'-hydroxyl but possessing a 4''-hydroxyl group (e.g. sisomicin and gentamicin) are also modifed but with poor specificity. The 3' position of the NTP ribose ring does not tolerate large substitutions (e.g. ddATP) and dNTPs and TTP are better substrates than their NTP counterparts. A short (2.35 Angstrom) hydrogen bond initially facilitates tight binding of the substrate (between Glu-52 and antibiotic) that is subsequently disrupted by the assembly of the active ternary complex. This enables the release of products post-catalysis, a 'catch and release' mechanism. The protein is Aminoglycoside nucleotidyltransferase (4') (knt) of Staphylococcus aureus.